The primary structure comprises 238 residues: Urease subunit alpha (238 aa).

The urease gamma stretch occupies residues 1-102 (MKLTPKELDK…LVTVHTPIEA (102 aa)). Positions 103-238 (NGKLVPGELF…DDNYVKTIKE (136 aa)) are urease beta.

The protein in the N-terminal section; belongs to the urease gamma subunit family. This sequence in the C-terminal section; belongs to the urease beta subunit family. Heterohexamer of 3 UreA (alpha) and 3 UreB (beta) subunits. Four heterohexamers assemble to form a 16 nm dodecameric complex.

It catalyses the reaction urea + 2 H2O + H(+) = hydrogencarbonate + 2 NH4(+). It functions in the pathway nitrogen metabolism; urea degradation; CO(2) and NH(3) from urea (urease route): step 1/1. The sequence is that of Urease subunit alpha from Helicobacter pylori (strain J99 / ATCC 700824) (Campylobacter pylori J99).